Reading from the N-terminus, the 303-residue chain is MTQQRTLKNTIRATGVGLHSGDKVYMTLRPAPVDHGVVFRRVDLEPVVEVPADAELVTETTLCTGLTCNGAKIQTVEHLMSALAGLGVDNVIVELSSAELPIMDGSSGPFVFLLQSAGIVEQSKPKRFIRIKQTVEVRDGDKVARFEPYEGYKLGFTIEFNHPMIPAKQSRQEIEFSTSAYVKEISRARTFGFMRDLEYMRERNLGLGGSMDNAIVLDEFRVLNEDGLRYTNEFVRHKILDAIGDLYLAGGAILGAYEGFKSGHALNNKLVRALLADQAAWEWVSFPEGTEQPPVTYASPVYA.

Zn(2+)-binding residues include H78, H237, and D241. Catalysis depends on H264, which acts as the Proton donor.

Belongs to the LpxC family. Zn(2+) serves as cofactor.

It catalyses the reaction a UDP-3-O-[(3R)-3-hydroxyacyl]-N-acetyl-alpha-D-glucosamine + H2O = a UDP-3-O-[(3R)-3-hydroxyacyl]-alpha-D-glucosamine + acetate. The protein operates within glycolipid biosynthesis; lipid IV(A) biosynthesis; lipid IV(A) from (3R)-3-hydroxytetradecanoyl-[acyl-carrier-protein] and UDP-N-acetyl-alpha-D-glucosamine: step 2/6. Functionally, catalyzes the hydrolysis of UDP-3-O-myristoyl-N-acetylglucosamine to form UDP-3-O-myristoylglucosamine and acetate, the committed step in lipid A biosynthesis. This is UDP-3-O-acyl-N-acetylglucosamine deacetylase from Xanthomonas euvesicatoria pv. vesicatoria (strain 85-10) (Xanthomonas campestris pv. vesicatoria).